The following is a 602-amino-acid chain: MRGWNVMVIGGGHAGLEAAWAAAKFARVAVLVSNPATVGRMPCNPAVGGPGKSQLVFEVQALGGLMGRLADDTAIHTRVLNASKGPAVQSLRVQNERDAYAERAQEILLGHSGIDVVRGEAADLEPDGCGGWFVVTTDGRRFHARSVVVAAGTFMRGVTWYGRYSRPEGRQGEPPSRFLSAPLARAGHRLKRYKTGTPPRVRADSVRFADLLEIPADPQPRGFTGRPGPRAAESPTWQTHTTPETHRLIQENLHESPMYAGDIAGLGPRYCPSIEDKVVRFAHHDRHLLFVEPDGVQTSEVYLQGFSSSLPPALQDRLVRSLPGFEAAVIQRYAYAVEYDVVDSTELTLNLESRLLPGIFTAGQINGTSGYEEAAAQGLVAGTAAARRALELEELQISRETSYLGVLLDDLVLKGSDEPYRMMTSRVEHRLIVRQDNADERLTELGVKLGLVDEDTQRAVQAKYRRVAEGIRALQMQRVQGQTGDAWLRRPEFALEDVEALGFKLPALSPEEREAVAIRVKYAGYIERAERQLAAEDRARELSLRGVAFGEIASLSNEAREKLERVRPLTVAQAAGIPGVRHADISALLVHLRRTGNVSRET.

FAD is bound at residue 10-15 (GGGHAG). The disordered stretch occupies residues 217–242 (DPQPRGFTGRPGPRAAESPTWQTHTT). 267-281 (GPRYCPSIEDKVVRF) serves as a coordination point for NAD(+).

It belongs to the MnmG family. Homodimer. Heterotetramer of two MnmE and two MnmG subunits. FAD is required as a cofactor.

The protein resides in the cytoplasm. Its function is as follows. NAD-binding protein involved in the addition of a carboxymethylaminomethyl (cmnm) group at the wobble position (U34) of certain tRNAs, forming tRNA-cmnm(5)s(2)U34. The protein is tRNA uridine 5-carboxymethylaminomethyl modification enzyme MnmG of Deinococcus geothermalis (strain DSM 11300 / CIP 105573 / AG-3a).